Reading from the N-terminus, the 269-residue chain is Hydroxypyruvate/pyruvate aldolase (269 aa).

Residue His47 is the Proton acceptor of the active site. The a divalent metal cation site is built by Glu151 and Asp177.

It belongs to the HpcH/HpaI aldolase family. A divalent metal cation serves as cofactor.

It carries out the reaction D-glyceraldehyde + 3-hydroxypyruvate = 2-dehydro-D-gluconate. It catalyses the reaction D-glyceraldehyde + 3-hydroxypyruvate = (3R,4S,5R)-3,4,5,6-tetrahydroxy-2-oxohexanoate. The catalysed reaction is D-glyceraldehyde + 3-hydroxypyruvate = 2-dehydro-D-galactonate. The enzyme catalyses D-glyceraldehyde + pyruvate = 2-dehydro-3-deoxy-L-galactonate. It carries out the reaction 2-dehydro-3-deoxy-D-gluconate = D-glyceraldehyde + pyruvate. Functionally, aldolase which can catalyze in vitro the aldolisation reaction between hydroxypyruvate (HPA) or pyruvate (PA) and D-glyceraldehyde (D-GA). The condensation of hydroxypyruvate and D-glyceraldehyde produces 2-dehydro-D-gluconate as the major product, (3R,4S,5R)-3,4,5,6-tetrahydroxy-2-oxohexanoate and 2-dehydro-D-galactonate. The condensation of pyruvate and D-glyceraldehyde produces 2-dehydro-3-deoxy-L-galactonate as the major product and 2-dehydro-3-deoxy-D-gluconate. The protein is Hydroxypyruvate/pyruvate aldolase of Cupriavidus necator (strain ATCC 17699 / DSM 428 / KCTC 22496 / NCIMB 10442 / H16 / Stanier 337) (Ralstonia eutropha).